Consider the following 119-residue polypeptide: Hydrogenase maturation factor HypA (119 aa).

A Ni(2+)-binding site is contributed by H2. 4 residues coordinate Zn(2+): C73, C76, C90, and C93.

Belongs to the HypA/HybF family.

Functionally, involved in the maturation of [NiFe] hydrogenases. Required for nickel insertion into the metal center of the hydrogenase. In Wolinella succinogenes (strain ATCC 29543 / DSM 1740 / CCUG 13145 / JCM 31913 / LMG 7466 / NCTC 11488 / FDC 602W) (Vibrio succinogenes), this protein is Hydrogenase maturation factor HypA.